Consider the following 350-residue polypeptide: Spermidine/putrescine import ATP-binding protein PotA (350 aa).

The ABC transporter domain maps to 6–236; that stretch reads LELRNISKQY…PENLWTAQFI (231 aa). ATP is bound at residue 38–45; that stretch reads GPSGCGKT.

The protein belongs to the ABC transporter superfamily. Spermidine/putrescine importer (TC 3.A.1.11.1) family. As to quaternary structure, the complex is composed of two ATP-binding proteins (PotA), two transmembrane proteins (PotB and PotC) and a solute-binding protein (PotD).

Its subcellular location is the cell membrane. It carries out the reaction ATP + H2O + polyamine-[polyamine-binding protein]Side 1 = ADP + phosphate + polyamineSide 2 + [polyamine-binding protein]Side 1.. Its function is as follows. Part of the ABC transporter complex PotABCD involved in spermidine/putrescine import. Responsible for energy coupling to the transport system. This Spiroplasma citri protein is Spermidine/putrescine import ATP-binding protein PotA.